Here is a 152-residue protein sequence, read N- to C-terminus: 2-C-methyl-D-erythritol 2,4-cyclodiphosphate synthase (152 aa).

Positions 8 and 10 each coordinate a divalent metal cation. Residues 8–10 (DSH) and 34–35 (HS) each bind 4-CDP-2-C-methyl-D-erythritol 2-phosphate. Histidine 42 serves as a coordination point for a divalent metal cation. Residues 56–58 (DIG), 61–65 (FPDTD), 100–106 (LDRPKLG), and 131–135 (FKTSE) contribute to the 4-CDP-2-C-methyl-D-erythritol 2-phosphate site.

Belongs to the IspF family. In terms of assembly, homotrimer. The cofactor is a divalent metal cation.

It catalyses the reaction 4-CDP-2-C-methyl-D-erythritol 2-phosphate = 2-C-methyl-D-erythritol 2,4-cyclic diphosphate + CMP. Its pathway is isoprenoid biosynthesis; isopentenyl diphosphate biosynthesis via DXP pathway; isopentenyl diphosphate from 1-deoxy-D-xylulose 5-phosphate: step 4/6. Involved in the biosynthesis of isopentenyl diphosphate (IPP) and dimethylallyl diphosphate (DMAPP), two major building blocks of isoprenoid compounds. Catalyzes the conversion of 4-diphosphocytidyl-2-C-methyl-D-erythritol 2-phosphate (CDP-ME2P) to 2-C-methyl-D-erythritol 2,4-cyclodiphosphate (ME-CPP) with a corresponding release of cytidine 5-monophosphate (CMP). The chain is 2-C-methyl-D-erythritol 2,4-cyclodiphosphate synthase from Thermus thermophilus (strain ATCC 27634 / DSM 579 / HB8).